The primary structure comprises 194 residues: Cysteine and glycine-rich protein 3 (194 aa).

Residues Met1–Gly5 form an interaction with TCAP region. Positions Cys10–Cys61 constitute an LIM zinc-binding 1 domain. A Nuclear localization signal motif is present at residues Arg64–Lys69. The interaction with CLF2 stretch occupies residues Gln94–Ser105. 3 positions are modified to phosphoserine: Ser95, Ser111, and Ser153. Residues Cys120 to Cys171 enclose the LIM zinc-binding 2 domain.

Self-associates. Oligomeric in the cytoplasm and monomeric in the nucleus. Homooligomers preferentially form along the actin cytoskeleton. Interacts with TCAP, ACTN2 and NRAP. Interacts with LDHD, SPTB, MYOD1, MYOG, MYF6. Interacts with GLRX3 (via C-terminus); GLRX3 and calcineurin compete for interaction with CSRP3. Interacts with CFL2; the stoichiometry influences F-actin depolymerization and possibly two molecules of CFL2 can interact with one molecule of CSRP3 resulting in the highest functional impact; the interaction is stronger with phosphorylated CFL2. Phosphorylated by PKC/PRKCA. In terms of tissue distribution, high in striated muscle and adult heart.

The protein localises to the nucleus. The protein resides in the cytoplasm. It localises to the cytoskeleton. Its subcellular location is the myofibril. It is found in the sarcomere. The protein localises to the z line. Positive regulator of myogenesis. Acts as a cofactor for myogenic bHLH transcription factors such as MYOD1, and probably MYOG and MYF6. Enhances the DNA-binding activity of the MYOD1:TCF3 isoform E47 complex and may promote formation of a functional MYOD1:TCF3 isoform E47:MEF2A complex involved in myogenesis. Plays a crucial and specific role in the organization of cytosolic structures in cardiomyocytes. Could play a role in mechanical stretch sensing. May be a scaffold protein that promotes the assembly of interacting proteins at Z-line structures. It is essential for calcineurin anchorage to the Z line. Required for stress-induced calcineurin-NFAT activation. The role in regulation of cytoskeleton dynamics by association with CFL2 is reported conflictingly. Proposed to contribute to the maintenance of muscle cell integrity through an actin-based mechanism. Can directly bind to actin filaments, cross-link actin filaments into bundles without polarity selectivity and protect them from dilution- and cofilin-mediated depolymerization; the function seems to involve its self-association. In vitro can inhibit PKC/PRKCA activity. Proposed to be involved in cardiac stress signaling by down-regulating excessive PKC/PRKCA signaling. The protein is Cysteine and glycine-rich protein 3 (Csrp3) of Rattus norvegicus (Rat).